Here is a 151-residue protein sequence, read N- to C-terminus: Transcriptional regulator MraZ (151 aa).

SpoVT-AbrB domains follow at residues 5–51 (AHEL…PVAE) and 81–124 (AEIL…GREQ).

Belongs to the MraZ family. Forms oligomers.

Its subcellular location is the cytoplasm. The protein resides in the nucleoid. This is Transcriptional regulator MraZ from Neisseria meningitidis serogroup C / serotype 2a (strain ATCC 700532 / DSM 15464 / FAM18).